Reading from the N-terminus, the 328-residue chain is Lipoyl synthase (328 aa).

Residues cysteine 75, cysteine 80, cysteine 86, cysteine 101, cysteine 105, cysteine 108, and serine 315 each contribute to the [4Fe-4S] cluster site. The Radical SAM core domain occupies 87–304 (FNHGTATFMI…EREAKKMGYE (218 aa)).

This sequence belongs to the radical SAM superfamily. Lipoyl synthase family. [4Fe-4S] cluster serves as cofactor.

Its subcellular location is the cytoplasm. It carries out the reaction [[Fe-S] cluster scaffold protein carrying a second [4Fe-4S](2+) cluster] + N(6)-octanoyl-L-lysyl-[protein] + 2 oxidized [2Fe-2S]-[ferredoxin] + 2 S-adenosyl-L-methionine + 4 H(+) = [[Fe-S] cluster scaffold protein] + N(6)-[(R)-dihydrolipoyl]-L-lysyl-[protein] + 4 Fe(3+) + 2 hydrogen sulfide + 2 5'-deoxyadenosine + 2 L-methionine + 2 reduced [2Fe-2S]-[ferredoxin]. It participates in protein modification; protein lipoylation via endogenous pathway; protein N(6)-(lipoyl)lysine from octanoyl-[acyl-carrier-protein]: step 2/2. Catalyzes the radical-mediated insertion of two sulfur atoms into the C-6 and C-8 positions of the octanoyl moiety bound to the lipoyl domains of lipoate-dependent enzymes, thereby converting the octanoylated domains into lipoylated derivatives. This chain is Lipoyl synthase, found in Colwellia psychrerythraea (strain 34H / ATCC BAA-681) (Vibrio psychroerythus).